Reading from the N-terminus, the 146-residue chain is Leghemoglobin Lb120-1 (146 aa).

Residues 2-146 (GFTEKQEALV…LASAIKKAMN (145 aa)) enclose the Globin domain. Nitrated tyrosine is present on residues Tyr-24 and Tyr-29. Ser-44 contributes to the heme b binding site. Ser-44 carries the post-translational modification Phosphoserine. His-61 provides a ligand contact to O2. Residues Lys-64, His-93, and Lys-96 each contribute to the heme b site. Tyr-134 carries the nitrated tyrosine modification.

The protein belongs to the plant globin family. As to quaternary structure, monomer. Nitrated in effective nodules and particularly in hypoxic conditions; this mechanism may play a protective role in the symbiosis by buffering toxic peroxynitrite NO(2)(-). Nitration level decrease during nodule senescence. In terms of processing, phosphorylation at Ser-44 disrupts the molecular environment of its porphyrin ring oxygen binding pocket, thus leading to a reduced oxygen consumption and to the delivery of oxygen O(2) to symbiosomes. In terms of tissue distribution, root nodules.

The protein resides in the cytoplasm. The protein localises to the cytosol. It localises to the nucleus. Leghemoglobin that reversibly binds oxygen O(2) through a pentacoordinated heme iron. In root nodules, facilitates the diffusion of oxygen to the bacteroids while preventing the bacterial nitrogenase from being inactivated by buffering dioxygen, nitric oxide and carbon monoxide, and promoting the formation of reactive oxygen species (ROS, e.g. H(2)O(2)). This role is essential for symbiotic nitrogen fixation (SNF). This Pisum sativum (Garden pea) protein is Leghemoglobin Lb120-1.